Consider the following 142-residue polypeptide: Photosystem II extrinsic protein U (142 aa).

Residues 1-29 (MKGLVRLLTVFSLLLGCWGWLGTTQIAQA) form the signal peptide.

This sequence belongs to the PsbU family. As to quaternary structure, PSII is composed of 1 copy each of membrane proteins PsbA, PsbB, PsbC, PsbD, PsbE, PsbF, PsbH, PsbI, PsbJ, PsbK, PsbL, PsbM, PsbT, PsbX, PsbY, PsbZ, Psb30/Ycf12, peripheral proteins PsbO, CyanoQ (PsbQ), PsbU, PsbV and a large number of cofactors. It forms dimeric complexes.

It is found in the cellular thylakoid membrane. Its function is as follows. One of the extrinsic, lumenal subunits of photosystem II (PSII). PSII is a light-driven water plastoquinone oxidoreductase, using light energy to abstract electrons from H(2)O, generating a proton gradient subsequently used for ATP formation. The extrinsic proteins stabilize the structure of photosystem II oxygen-evolving complex (OEC), the ion environment of oxygen evolution and protect the OEC against heat-induced inactivation. The chain is Photosystem II extrinsic protein U from Trichormus variabilis (strain ATCC 29413 / PCC 7937) (Anabaena variabilis).